The primary structure comprises 250 residues: Endonuclease NucS (250 aa).

This sequence belongs to the NucS endonuclease family.

Its subcellular location is the cytoplasm. In terms of biological role, cleaves both 3' and 5' ssDNA extremities of branched DNA structures. In Sulfolobus acidocaldarius (strain ATCC 33909 / DSM 639 / JCM 8929 / NBRC 15157 / NCIMB 11770), this protein is Endonuclease NucS.